The chain runs to 289 residues: S-methyl-5'-thioadenosine phosphorylase (289 aa).

Phosphate is bound by residues S24, R66–H67, and T99–A100. Residue M202 participates in substrate binding. T203 contributes to the phosphate binding site. D226–D228 is a substrate binding site.

This sequence belongs to the PNP/MTAP phosphorylase family. MTAP subfamily. Homotrimer. In embryos, expressed in the fat body and visceral mesoderm.

It is found in the cytoplasm. Its subcellular location is the nucleus. It carries out the reaction S-methyl-5'-thioadenosine + phosphate = 5-(methylsulfanyl)-alpha-D-ribose 1-phosphate + adenine. Its pathway is amino-acid biosynthesis; L-methionine biosynthesis via salvage pathway; S-methyl-5-thio-alpha-D-ribose 1-phosphate from S-methyl-5'-thioadenosine (phosphorylase route): step 1/1. Catalyzes the reversible phosphorylation of S-methyl-5'-thioadenosine (MTA) to adenine and 5-methylthioribose-1-phosphate. Involved in the breakdown of MTA, a major by-product of polyamine biosynthesis. Responsible for the first step in the methionine salvage pathway after MTA has been generated from S-adenosylmethionine. Has broad substrate specificity with 6-aminopurine nucleosides as preferred substrates. The polypeptide is S-methyl-5'-thioadenosine phosphorylase (Mtap) (Drosophila melanogaster (Fruit fly)).